Here is a 64-residue protein sequence, read N- to C-terminus: Alpha-conotoxin-like Lp1.8 (64 aa).

Positions 1 to 21 are cleaved as a signal peptide; it reads MGMRMMFTMFLLVVLTTTVVS. Positions 22–41 are excised as a propeptide; it reads FNSDRESNHENRRTSNQITR. Intrachain disulfides connect cysteine 47–cysteine 53 and cysteine 48–cysteine 61. The segment at 49–51 is lacks the Ser-Xaa-Pro motif that is crucial for potent interaction with nAChR; it reads KDP.

This sequence belongs to the conotoxin A superfamily. In terms of tissue distribution, expressed by the venom duct.

It is found in the secreted. Its function is as follows. Alpha-conotoxins act on postsynaptic membranes, they bind to the nicotinic acetylcholine receptors (nAChR) and thus inhibit them. Has possibly a distinct nAChR binding mode from other alpha-conotoxins, due to a different three residue motif (Lys-Xaa-Pro instead of the conserved Ser-Xaa-Pro motif). This chain is Alpha-conotoxin-like Lp1.8, found in Conus leopardus (Leopard cone).